The sequence spans 691 residues: MEALIPVINKLQDVFNTVGADIIQLPQIAVVGTQSSGKSSVLESLVGRDLLPRGTGIVTRRPLILQLVHVDPEDRRKTSEENGVDGEEWGKFLHTKNKIYTDFDEIRQEIENETERVSGNNKGISDEPIHLKIFSPHVVNLTLVDLPGITKVPVGDQPKDIELQIRELILKYISNPNSIILAVTAANTDMATSEALKVAREVDPDGRRTLAVVTKLDLMDAGTDAMDVLMGRVIPVKLGLIGVVNRSQLDINNKKSVADSIRDEHGFLQKKYPSLANRNGTKYLARTLNRLLMHHIRDCLPELKTRINVLSAQYQSLLSSYGEPVEDMSATLLQLITKFATEYCNTIEGTAKYIETAELCGGARICYIFHETFGRTLESVDPLGGLTTIDVLTAIRNATGPRPALFVPEVSFELLVKRQVKRLEEPSLRCVELVHEEMQRIIQHCSNYSTQELLRFPKLHDAIVEVVTSLLRKRLPVTNEMVHNLVAIELAYINTKHPDFADACGLMNNNIEEQRRNRMRELPTSVPRDKMAGGAQAEQEGGTGTWRGMLKKGDEGQGEEKTKLQSSIPASPQKGHAVNLLDVPVPVARKLSAREQRDCEVIERLIKSYFLIVRKNIQDSVPKAVMHFLVNHVKDSLQSELVGQLYKPALLDDLLTESEDMAQRRNEAADMLKALQKASQVIAEIRETHLW.

In terms of domain architecture, Dynamin-type G spans 22-301 (IIQLPQIAVV…LMHHIRDCLP (280 aa)). A G1 motif region spans residues 32–39 (GTQSSGKS). 32–40 (GTQSSGKSS) contacts GTP. The segment at 58–60 (VTR) is G2 motif. The segment at 145–148 (DLPG) is G3 motif. The segment at 214–217 (TKLD) is G4 motif. GTP-binding positions include 214–220 (TKLDLMD) and 245–248 (NRSQ). Residues 244–247 (VNRS) are G5 motif. Residues 343-488 (YCNTIEGTAK…NEMVHNLVAI (146 aa)) form a middle domain region. 2 stretches are compositionally biased toward basic and acidic residues: residues 522–531 (LPTSVPRDKM) and 551–563 (KKGD…EKTK). A disordered region spans residues 522–573 (LPTSVPRDKMAGGAQAEQEGGTGTWRGMLKKGDEGQGEEKTKLQSSIPASPQ). In terms of domain architecture, GED spans 599–690 (CEVIERLIKS…VIAEIRETHL (92 aa)). Residues 609 to 623 (YFLIVRKNIQDSVPK) are important for homodimerization.

It belongs to the TRAFAC class dynamin-like GTPase superfamily. Dynamin/Fzo/YdjA family. In terms of assembly, homotetramer; dimerizes through the N-terminal GTP-middle region of one molecule binding to the GED domain of another DNM1L molecule. Oligomerizes in a GTP-dependent manner to form membrane-associated tubules with a spiral pattern.

It localises to the cytoplasm. Its subcellular location is the cytosol. The protein localises to the golgi apparatus. It is found in the endomembrane system. The protein resides in the mitochondrion outer membrane. It localises to the peroxisome. Its subcellular location is the membrane. The protein localises to the clathrin-coated pit. It is found in the cytoplasmic vesicle. The protein resides in the secretory vesicle. It localises to the synaptic vesicle membrane. It catalyses the reaction GTP + H2O = GDP + phosphate + H(+). Functions in mitochondrial and peroxisomal division. Mediates membrane fission through oligomerization into membrane-associated tubular structures that wrap around the scission site to constrict and sever the mitochondrial membrane through a GTP hydrolysis-dependent mechanism. The specific recruitment at scission sites is mediated by membrane receptors like MFF, MIEF1 and MIEF2 for mitochondrial membranes. While the recruitment by the membrane receptors is GTP-dependent, the following hydrolysis of GTP induces the dissociation from the receptors and allows DNM1L filaments to curl into closed rings that are probably sufficient to sever a double membrane. May play a role in the circadian control of mitochondrial ATP production. The protein is Dynamin-1-like protein of Danio rerio (Zebrafish).